The primary structure comprises 101 residues: MINEIIRESKDKNGILIDVEISSNAKKNEIGEINEWRKRLIIKIKALPVDGKANKEIAKFFKKTFGKDIIIVSGLTSSQKTICVIGATKDEIIDKILKNNI.

It belongs to the UPF0235 family.

The chain is UPF0235 protein Maeo_0841 from Methanococcus aeolicus (strain ATCC BAA-1280 / DSM 17508 / OCM 812 / Nankai-3).